The primary structure comprises 368 residues: Histidinol-phosphate aminotransferase (368 aa).

Residue lysine 215 is modified to N6-(pyridoxal phosphate)lysine.

Belongs to the class-II pyridoxal-phosphate-dependent aminotransferase family. Histidinol-phosphate aminotransferase subfamily. In terms of assembly, homodimer. The cofactor is pyridoxal 5'-phosphate.

The catalysed reaction is L-histidinol phosphate + 2-oxoglutarate = 3-(imidazol-4-yl)-2-oxopropyl phosphate + L-glutamate. It participates in amino-acid biosynthesis; L-histidine biosynthesis; L-histidine from 5-phospho-alpha-D-ribose 1-diphosphate: step 7/9. In Buchnera aphidicola subsp. Acyrthosiphon pisum (strain APS) (Acyrthosiphon pisum symbiotic bacterium), this protein is Histidinol-phosphate aminotransferase (hisC).